We begin with the raw amino-acid sequence, 81 residues long: Exodeoxyribonuclease 7 small subunit (81 aa).

The protein belongs to the XseB family. In terms of assembly, heterooligomer composed of large and small subunits.

It localises to the cytoplasm. It catalyses the reaction Exonucleolytic cleavage in either 5'- to 3'- or 3'- to 5'-direction to yield nucleoside 5'-phosphates.. In terms of biological role, bidirectionally degrades single-stranded DNA into large acid-insoluble oligonucleotides, which are then degraded further into small acid-soluble oligonucleotides. This is Exodeoxyribonuclease 7 small subunit from Rhodopseudomonas palustris (strain BisA53).